Reading from the N-terminus, the 387-residue chain is Yellow-related salivary protein ASP2 (387 aa).

An N-terminal signal peptide occupies residues 1–18; it reads MKIFLCLIVVVSLQGVLA.

The protein belongs to the major royal jelly protein family. As to expression, female salivary gland (at protein level).

Its subcellular location is the secreted. Functionally, probably modulates blood feeding of sand flies on vertebrate species by binding and sequestering different mediators involved in the host response. Binds biogenic amines. Binds octopamine with high affinity. Binds serotonin and dopamine with medium affinity. Poorly binds histamine. Does not bind noradrenaline and adrenaline. This is Yellow-related salivary protein ASP2 from Phlebotomus orientalis (Phlebotomine sand fly).